Reading from the N-terminus, the 423-residue chain is Serine--tRNA ligase (423 aa).

229-231 (TAE) contacts L-serine. 260–262 (RKE) serves as a coordination point for ATP. Position 283 (glutamate 283) interacts with L-serine. 347-350 (EVSS) lines the ATP pocket. Position 383 (serine 383) interacts with L-serine.

It belongs to the class-II aminoacyl-tRNA synthetase family. Type-1 seryl-tRNA synthetase subfamily. Homodimer. The tRNA molecule binds across the dimer.

The protein localises to the cytoplasm. It catalyses the reaction tRNA(Ser) + L-serine + ATP = L-seryl-tRNA(Ser) + AMP + diphosphate + H(+). The enzyme catalyses tRNA(Sec) + L-serine + ATP = L-seryl-tRNA(Sec) + AMP + diphosphate + H(+). It functions in the pathway aminoacyl-tRNA biosynthesis; selenocysteinyl-tRNA(Sec) biosynthesis; L-seryl-tRNA(Sec) from L-serine and tRNA(Sec): step 1/1. Catalyzes the attachment of serine to tRNA(Ser). Is also able to aminoacylate tRNA(Sec) with serine, to form the misacylated tRNA L-seryl-tRNA(Sec), which will be further converted into selenocysteinyl-tRNA(Sec). The sequence is that of Serine--tRNA ligase from Chloroflexus aurantiacus (strain ATCC 29366 / DSM 635 / J-10-fl).